A 1031-amino-acid chain; its full sequence is Formin-binding protein 4 (1031 aa).

Disordered stretches follow at residues 1–102 (MMGK…TTRP), 116–143 (AYADSDDDESDVSEKTAQSKEANGNQAT), and 166–205 (APVVASAPPPTPPRPEPKEAATPALSPTASNGSDTAQTPG). Ser-19 is subject to Phosphoserine. 2 stretches are compositionally biased toward low complexity: residues 41–73 (DSTAAATSQSAPAAATAAAATSPAVPASAAPED) and 83–92 (VVEVPNVVQN). Phosphoserine occurs at positions 120, 125, and 128. A compositionally biased stretch (polar residues) spans 134–143 (SKEANGNQAT). At Thr-176 the chain carries Phosphothreonine. The segment covering 190–203 (LSPTASNGSDTAQT) has biased composition (polar residues). In terms of domain architecture, WW 1 spans 218-252 (EIEMGDWQEVWDENTGCYYYWNTQTNEVTWELPQY). Lys-294 carries the N6-acetyllysine modification. Residue Lys-305 forms a Glycyl lysine isopeptide (Lys-Gly) (interchain with G-Cter in SUMO1) linkage. Residue Lys-339 forms a Glycyl lysine isopeptide (Lys-Gly) (interchain with G-Cter in SUMO2) linkage. Residue Lys-352 forms a Glycyl lysine isopeptide (Lys-Gly) (interchain with G-Cter in SUMO1); alternate linkage. A Glycyl lysine isopeptide (Lys-Gly) (interchain with G-Cter in SUMO2); alternate cross-link involves residue Lys-352. The segment at 355–518 (DPVSETKETS…KETEVEESSE (164 aa)) is disordered. Residues 400–414 (ESEEEEEEEEQDTLE) show a composition bias toward acidic residues. The segment covering 418-430 (ALERKKAELRALE) has biased composition (basic and acidic residues). Residues Ser-435, Ser-440, Ser-443, Ser-446, and Ser-450 each carry the phosphoserine modification. The segment covering 436–450 (VSGSSPRSDISQPAS) has biased composition (polar residues). The span at 457-466 (IMSKRGKWKM) shows a compositional bias: basic residues. Low complexity predominate over residues 469 to 482 (RATSPESTSRSSSK). Residues Ser-472, Ser-507, and Ser-516 each carry the phosphoserine modification. Positions 499 to 518 (DSEKIDEISDKETEVEESSE) are enriched in basic and acidic residues. Lys-527 is covalently cross-linked (Glycyl lysine isopeptide (Lys-Gly) (interchain with G-Cter in SUMO1); alternate). Lys-527 is covalently cross-linked (Glycyl lysine isopeptide (Lys-Gly) (interchain with G-Cter in SUMO2); alternate). One can recognise a WW 2 domain in the interval 603–637 (NATPKGWSCHWDRDHRRYFYVNEQSGESQWEFPDG). 3 disordered regions span residues 629–681 (ESQW…SLCK), 712–813 (PLPL…VQRS), and 900–994 (PAQA…RIEE). Residues 643 to 663 (SQTKEVRDESLPKLTVKDKTC) are compositionally biased toward basic and acidic residues. Positions 664–677 (TDPNSTESSENPTG) are enriched in polar residues. The span at 712 to 741 (PLPLEMPPPPPPPPESPPPPPPPPPPPPPL) shows a compositional bias: pro residues. The span at 742–757 (EDGEIQEVEMEDEGSE) shows a compositional bias: acidic residues. Residues 771 to 794 (KPSTQTTAVTSQSLVDSTASSPPS) are compositionally biased toward polar residues. Residues 913 to 939 (VEPPPPPPPPPTPTPPPPPPAPKVPPP) are compositionally biased toward pro residues. Residues 943-955 (RKGKKDKAKKSKT) show a composition bias toward basic residues. Residues 971–984 (LDEEDNSSSSEEDR) show a composition bias toward acidic residues. Phosphoserine is present on residues Ser-977, Ser-978, and Ser-979. A compositionally biased stretch (basic and acidic residues) spans 985 to 994 (ESTAQKRIEE).

As to quaternary structure, binds FMN1. Interacts with the Arg/Gly-rich-flanked Pro-rich regions of KHDRBS1/SAM68. Arginine methylation in these regions has no effect on this binding. Ubiquitous. Highest levels in spleen and thymus.

The polypeptide is Formin-binding protein 4 (Fnbp4) (Mus musculus (Mouse)).